A 121-amino-acid polypeptide reads, in one-letter code: LOB domain-containing protein 24 (121 aa).

An LOB domain is found at 4–105 (KRCAACKYLR…NELAKTQAEI (102 aa)).

The protein belongs to the LOB domain-containing protein family.

This Arabidopsis thaliana (Mouse-ear cress) protein is LOB domain-containing protein 24 (LBD24).